The following is a 517-amino-acid chain: Acetyl-coenzyme A carboxylase carboxyl transferase subunit beta, chloroplastic (517 aa).

Composition is skewed to basic and acidic residues over residues 1-17 (MKPTKPEGPKKPNKSNE), 24-41 (GDNKEDLEGPKKPNKSNE), 48-65 (GDNKEDLEGPKKPNKSNE), and 72-81 (GDKQKDKKDG). 2 disordered regions span residues 1–179 (MKPT…KEEE) and 204–234 (KHRDRKSVPAKERELVPAQSTKRDTDPDSEA). Positions 87 to 131 (YDDEYEEDLEYDDEYEEDLEYDDEYEEDLEYDDEEYDDEYEEDLE) are enriched in acidic residues. Basic and acidic residues-rich tracts occupy residues 132 to 179 (GDNK…KEEE) and 209 to 229 (KSVPAKERELVPAQSTKRDTD). Positions 243–514 (LWVHCKLCSG…NSQVINIYNY (272 aa)) constitute a CoA carboxyltransferase N-terminal domain. Residues C247, C250, C266, and C269 each coordinate Zn(2+). Residues 247-269 (CKLCSGFNYKKILKSKNNVCEQC) form a C4-type zinc finger.

Belongs to the AccD/PCCB family. As to quaternary structure, acetyl-CoA carboxylase is a heterohexamer composed of biotin carboxyl carrier protein, biotin carboxylase and 2 subunits each of ACCase subunit alpha and ACCase plastid-coded subunit beta (accD). Requires Zn(2+) as cofactor.

It localises to the plastid. The protein resides in the chloroplast stroma. The catalysed reaction is N(6)-carboxybiotinyl-L-lysyl-[protein] + acetyl-CoA = N(6)-biotinyl-L-lysyl-[protein] + malonyl-CoA. The protein operates within lipid metabolism; malonyl-CoA biosynthesis; malonyl-CoA from acetyl-CoA: step 1/1. Functionally, component of the acetyl coenzyme A carboxylase (ACC) complex. Biotin carboxylase (BC) catalyzes the carboxylation of biotin on its carrier protein (BCCP) and then the CO(2) group is transferred by the transcarboxylase to acetyl-CoA to form malonyl-CoA. This is Acetyl-coenzyme A carboxylase carboxyl transferase subunit beta, chloroplastic from Oenothera elata subsp. hookeri (Hooker's evening primrose).